The chain runs to 184 residues: dTTP/UTP pyrophosphatase (184 aa).

D65 (proton acceptor) is an active-site residue.

It belongs to the Maf family. YhdE subfamily. The cofactor is a divalent metal cation.

Its subcellular location is the cytoplasm. The enzyme catalyses dTTP + H2O = dTMP + diphosphate + H(+). The catalysed reaction is UTP + H2O = UMP + diphosphate + H(+). Its function is as follows. Nucleoside triphosphate pyrophosphatase that hydrolyzes dTTP and UTP. May have a dual role in cell division arrest and in preventing the incorporation of modified nucleotides into cellular nucleic acids. In Thermococcus onnurineus (strain NA1), this protein is dTTP/UTP pyrophosphatase.